The primary structure comprises 388 residues: Venom acid phosphatase Acph-1 (388 aa).

The first 15 residues, methionine 1 to alanine 15, serve as a signal peptide directing secretion. The Nucleophile role is filled by histidine 26. Intrachain disulfides connect cysteine 145–cysteine 355 and cysteine 330–cysteine 334. N-linked (GlcNAc...) asparagine glycans are attached at residues asparagine 182 and asparagine 228. Residue glutamate 273 is the Proton donor of the active site. Asparagine 366 carries N-linked (GlcNAc...) asparagine glycosylation.

This sequence belongs to the histidine acid phosphatase family. Expressed by the venom gland.

The protein localises to the secreted. The catalysed reaction is a phosphate monoester + H2O = an alcohol + phosphate. This is Venom acid phosphatase Acph-1 from Apis mellifera (Honeybee).